The primary structure comprises 87 residues: Putative regulatory protein ABC2323 (87 aa).

Belongs to the RemA family.

In Shouchella clausii (strain KSM-K16) (Alkalihalobacillus clausii), this protein is Putative regulatory protein ABC2323.